The following is a 558-amino-acid chain: 2-isopropylmalate synthase (558 aa).

One can recognise a Pyruvate carboxyltransferase domain in the interval 31–305 (PRWCSTDLRD…YPNLDFSDMR (275 aa)). Residues Asp-40, His-244, His-246, and Asn-280 each contribute to the Mg(2+) site. The regulatory domain stretch occupies residues 439-558 (NPDDKGQMKL…NACHPLYKEA (120 aa)).

Belongs to the alpha-IPM synthase/homocitrate synthase family. LeuA type 2 subfamily. In terms of assembly, homodimer. Mg(2+) is required as a cofactor.

It localises to the cytoplasm. The catalysed reaction is 3-methyl-2-oxobutanoate + acetyl-CoA + H2O = (2S)-2-isopropylmalate + CoA + H(+). Its pathway is amino-acid biosynthesis; L-leucine biosynthesis; L-leucine from 3-methyl-2-oxobutanoate: step 1/4. Its function is as follows. Catalyzes the condensation of the acetyl group of acetyl-CoA with 3-methyl-2-oxobutanoate (2-ketoisovalerate) to form 3-carboxy-3-hydroxy-4-methylpentanoate (2-isopropylmalate). The protein is 2-isopropylmalate synthase of Marinomonas sp. (strain MWYL1).